The following is a 70-amino-acid chain: MKQGIHPEYKEITATCSCGNVIKTRSTVEKNLNLDVCGNCHPFYTGKQRVVDTGGRVERFNKRFNIPSTK.

Zn(2+) contacts are provided by cysteine 16, cysteine 18, cysteine 37, and cysteine 40.

The protein belongs to the bacterial ribosomal protein bL31 family. Type A subfamily. Part of the 50S ribosomal subunit. Zn(2+) is required as a cofactor.

Binds the 23S rRNA. The protein is Large ribosomal subunit protein bL31 of Haemophilus ducreyi (strain 35000HP / ATCC 700724).